The primary structure comprises 359 residues: Isopentenyl-diphosphate delta-isomerase (359 aa).

12 to 13 is a binding site for substrate; the sequence is RK. Residues S68, 69 to 71, S99, and N128 each bind FMN; that span reads AMT. 99-101 contributes to the substrate binding site; the sequence is SQR. Residue Q162 coordinates substrate. Residue E163 participates in Mg(2+) binding. FMN is bound by residues K194, T224, 277–279, and 298–299; these read GIR and AL.

It belongs to the IPP isomerase type 2 family. As to quaternary structure, homooctamer. Dimer of tetramers. The cofactor is FMN. NADPH serves as cofactor. Mg(2+) is required as a cofactor.

Its subcellular location is the cytoplasm. It catalyses the reaction isopentenyl diphosphate = dimethylallyl diphosphate. Its function is as follows. Involved in the biosynthesis of isoprenoids. Catalyzes the 1,3-allylic rearrangement of the homoallylic substrate isopentenyl (IPP) to its allylic isomer, dimethylallyl diphosphate (DMAPP). The sequence is that of Isopentenyl-diphosphate delta-isomerase from Methanoregula boonei (strain DSM 21154 / JCM 14090 / 6A8).